The sequence spans 515 residues: Bifunctional purine biosynthesis protein PurH (515 aa).

Residues 1-145 enclose the MGS-like domain; the sequence is MTKRVLISVS…KNHASVTVVV (145 aa).

Belongs to the PurH family.

It catalyses the reaction (6R)-10-formyltetrahydrofolate + 5-amino-1-(5-phospho-beta-D-ribosyl)imidazole-4-carboxamide = 5-formamido-1-(5-phospho-D-ribosyl)imidazole-4-carboxamide + (6S)-5,6,7,8-tetrahydrofolate. It carries out the reaction IMP + H2O = 5-formamido-1-(5-phospho-D-ribosyl)imidazole-4-carboxamide. Its pathway is purine metabolism; IMP biosynthesis via de novo pathway; 5-formamido-1-(5-phospho-D-ribosyl)imidazole-4-carboxamide from 5-amino-1-(5-phospho-D-ribosyl)imidazole-4-carboxamide (10-formyl THF route): step 1/1. It participates in purine metabolism; IMP biosynthesis via de novo pathway; IMP from 5-formamido-1-(5-phospho-D-ribosyl)imidazole-4-carboxamide: step 1/1. The polypeptide is Bifunctional purine biosynthesis protein PurH (Streptococcus pneumoniae serotype 2 (strain D39 / NCTC 7466)).